Here is a 357-residue protein sequence, read N- to C-terminus: Glucose-6-phosphatase catalytic subunit 1 (357 aa).

Residues 1-28 (MEEGMNILHDFGIQSTRYLQVNYQDSQD) lie on the Lumenal side of the membrane. A helical transmembrane segment spans residues 29 to 49 (WFILVSVIADLRNAFYVLFPI). Residues 50 to 60 (WFHLKETVGIN) are Cytoplasmic-facing. Residues 61–81 (LLWVAVVGDWFNLVFKWILFG) form a helical membrane-spanning segment. The Lumenal segment spans residues 82–117 (QRPYWWVLDTDYYSNSSVPIIKQFPVTCETGPGSPS). Arginine 83 provides a ligand contact to substrate. A glycan (N-linked (GlcNAc...) asparagine) is linked at asparagine 96. The chain crosses the membrane as a helical span at residues 118–138 (GHAMGAAGVYYVMVTSTLAIF). Histidine 119 functions as the Proton donor in the catalytic mechanism. Residues 139–147 (RGKKKPTYG) are Cytoplasmic-facing. A helical transmembrane segment spans residues 148–168 (FRCLNVILWLGFWAVQLNVCL). Residues 169–179 (SRIYLAAHFPH) lie on the Lumenal side of the membrane. Residue arginine 170 participates in substrate binding. Catalysis depends on histidine 176, which acts as the Nucleophile. A helical membrane pass occupies residues 180-202 (QVVAGVLSGIAVAETFSHIRGIY). Residues 203-211 (NASLRKYCL) are Cytoplasmic-facing. Residues 212 to 232 (ITIFLFGFALGFYLLLKGLGV) form a helical membrane-spanning segment. Topologically, residues 233–254 (DLLWTLEKAKRWCERPEWVHLD) are lumenal. The helical transmembrane segment at 255-275 (TTPFASLFKNLGTLLGLGLAL) threads the bilayer. Residues 276–291 (NSSMYRKSCKGELSKL) are Cytoplasmic-facing. A helical transmembrane segment spans residues 292-312 (LPFRFACIVASLVLLHLFDSL). At 313–320 (KPPSQVEL) the chain is on the lumenal side. The chain crosses the membrane as a helical span at residues 321–341 (IFYILSFCKSATVPFASVSLI). The Cytoplasmic portion of the chain corresponds to 342–357 (PYCLARILGQTHKKSL). Residues 354–357 (KKSL) carry the Prevents secretion from ER motif.

It belongs to the glucose-6-phosphatase family. As to expression, liver and kidney.

The protein resides in the endoplasmic reticulum membrane. The enzyme catalyses D-glucose 6-phosphate + H2O = D-glucose + phosphate. It participates in carbohydrate biosynthesis; gluconeogenesis. Functionally, hydrolyzes glucose-6-phosphate to glucose in the endoplasmic reticulum. Forms with the glucose-6-phosphate transporter (SLC37A4/G6PT) the complex responsible for glucose production in the terminal step of glycogenolysis and gluconeogenesis. Hence, it is the key enzyme in homeostatic regulation of blood glucose levels. The sequence is that of Glucose-6-phosphatase catalytic subunit 1 (G6pc1) from Mus musculus (Mouse).